A 389-amino-acid chain; its full sequence is Chalcone synthase 2 (389 aa).

The active site involves cysteine 164.

It belongs to the thiolase-like superfamily. Chalcone/stilbene synthases family.

It carries out the reaction (E)-4-coumaroyl-CoA + 3 malonyl-CoA + 3 H(+) = 2',4,4',6'-tetrahydroxychalcone + 3 CO2 + 4 CoA. It functions in the pathway secondary metabolite biosynthesis; flavonoid biosynthesis. In terms of biological role, the primary product of this enzyme is 4,2',4',6'-tetrahydroxychalcone (also termed naringenin-chalcone or chalcone) which can under specific conditions spontaneously isomerize into naringenin. This chain is Chalcone synthase 2 (CHS2), found in Solanum lycopersicum (Tomato).